The chain runs to 372 residues: ATP-sensitive inward rectifier potassium channel 1 (372 aa).

The Cytoplasmic segment spans residues 1–58 (MFKHLRRWFVTHIFGRSRQRARLVSKDGRCNIEFGNVDAQSRFIFFVDIWTTVLDLKW). Ser25 carries the post-translational modification Phosphoserine; by SGK1. The helical transmembrane segment at 59 to 83 (RYKMTVFITAFLGSWFLFGLLWYVV) threads the bilayer. Over 84–108 (AYVHKDLPEFYPPDNRTPCVENING) the chain is Extracellular. An N-linked (GlcNAc...) asparagine glycan is attached at Asn98. Positions 109–120 (MTSAFLFSLETQ) form an intramembrane region, helical; Pore-forming. Positions 121–127 (VTIGYGF) form an intramembrane region, pore-forming. The Selectivity filter motif lies at 122–127 (TIGYGF). At 128-136 (RFVTEQCAT) the chain is on the extracellular side. A helical membrane pass occupies residues 137-158 (AIFLLIFQSILGVIINSFMCGA). The Cytoplasmic segment spans residues 159–372 (ILAKISRPKK…EVDETDDTQM (214 aa)). Residues 161–188 (AKISRPKKRAKTITFSKNAVISKRGGKL) form a polyphosphoinositide (PIP2)-binding region. 204 to 211 (GSHIYGKL) is an ATP binding site.

This sequence belongs to the inward rectifier-type potassium channel (TC 1.A.2.1) family. KCNJ1 subfamily. Interacts with SGK1 and SLC9A3R2/NHERF2. In terms of processing, phosphorylation at Ser-25 by SGK1 is necessary for its expression at the cell membrane.

It is found in the cell membrane. It catalyses the reaction K(+)(in) = K(+)(out). Inhibited by WNK3. Activated by phosphatidylinositol 4,5 biphosphate (PtdIns(4,5)P2). Inward rectifier potassium channels are characterized by a greater tendency to allow potassium to flow into the cell rather than out of it. Their voltage dependence is regulated by the concentration of extracellular potassium; as external potassium is raised, the voltage range of the channel opening shifts to more positive voltages. The inward rectification is mainly due to the blockage of outward current by internal magnesium. This channel is activated by internal ATP and can be blocked by external barium. In the kidney, probably plays a major role in potassium homeostasis. The chain is ATP-sensitive inward rectifier potassium channel 1 (Kcnj1) from Mus musculus (Mouse).